Reading from the N-terminus, the 648-residue chain is Indolepyruvate oxidoreductase subunit IorA (648 aa).

4Fe-4S ferredoxin-type domains follow at residues 585–614 (PIYQ…WDAE) and 616–645 (KKAR…KVRE). Residues cysteine 594, cysteine 597, cysteine 600, cysteine 606, cysteine 625, cysteine 628, cysteine 631, and cysteine 635 each contribute to the [4Fe-4S] cluster site.

Heterodimer of the IorA and IorB subunits. It depends on [4Fe-4S] cluster as a cofactor.

The enzyme catalyses indole-3-pyruvate + 2 oxidized [2Fe-2S]-[ferredoxin] + CoA = (indol-3-yl)acetyl-CoA + 2 reduced [2Fe-2S]-[ferredoxin] + CO2 + H(+). Its function is as follows. Catalyzes the ferredoxin-dependent oxidative decarboxylation of arylpyruvates. The chain is Indolepyruvate oxidoreductase subunit IorA (iorA) from Pyrococcus horikoshii (strain ATCC 700860 / DSM 12428 / JCM 9974 / NBRC 100139 / OT-3).